The following is a 191-amino-acid chain: TATA-box-binding protein (191 aa).

Repeat copies occupy residues 18–94 and 108–185.

Belongs to the TBP family. As to quaternary structure, belongs to the TFIID complex together with the TBP-associated factors (TAFs). Binds DNA as monomer.

Its subcellular location is the nucleus. In terms of biological role, general transcription factor that functions at the core of the DNA-binding multiprotein factor TFIID. Binding of TFIID to the TATA box is the initial transcriptional step of the pre-initiation complex (PIC), playing a role in the activation of eukaryotic genes transcribed by RNA polymerase II. The polypeptide is TATA-box-binding protein (Acetabularia peniculus (Green alga)).